Consider the following 553-residue polypeptide: CTP synthase (553 aa).

An amidoligase domain region spans residues M1–L278. Residue S25 participates in CTP binding. S25 lines the UTP pocket. ATP is bound by residues S26 to L31 and D83. Positions 83 and 152 each coordinate Mg(2+). CTP is bound by residues D159–E161, K199–Q204, and K235. Residues K199–Q204 and K235 each bind UTP. Positions N303–A552 constitute a Glutamine amidotransferase type-1 domain. G366 is a binding site for L-glutamine. C393 acts as the Nucleophile; for glutamine hydrolysis in catalysis. L-glutamine contacts are provided by residues L394–Q397, E417, and R478. Residues H525 and E527 contribute to the active site.

It belongs to the CTP synthase family. In terms of assembly, homotetramer.

The enzyme catalyses UTP + L-glutamine + ATP + H2O = CTP + L-glutamate + ADP + phosphate + 2 H(+). The catalysed reaction is L-glutamine + H2O = L-glutamate + NH4(+). It carries out the reaction UTP + NH4(+) + ATP = CTP + ADP + phosphate + 2 H(+). Its pathway is pyrimidine metabolism; CTP biosynthesis via de novo pathway; CTP from UDP: step 2/2. Allosterically activated by GTP, when glutamine is the substrate; GTP has no effect on the reaction when ammonia is the substrate. The allosteric effector GTP functions by stabilizing the protein conformation that binds the tetrahedral intermediate(s) formed during glutamine hydrolysis. Inhibited by the product CTP, via allosteric rather than competitive inhibition. In terms of biological role, catalyzes the ATP-dependent amination of UTP to CTP with either L-glutamine or ammonia as the source of nitrogen. Regulates intracellular CTP levels through interactions with the four ribonucleotide triphosphates. The sequence is that of CTP synthase from Bifidobacterium longum (strain NCC 2705).